The chain runs to 84 residues: Perlustrin (84 aa).

An IGFBP N-terminal domain is found at 1-82; it reads LSCASCENAA…LDFKGVCARV (82 aa). Intrachain disulfides connect Cys3-Cys28, Cys6-Cys30, Cys11-Cys31, Cys18-Cys34, Cys42-Cys55, and Cys49-Cys79.

In terms of tissue distribution, shell.

Functionally, binds human IGF1 and IGF2 and bovine insulin. The protein is Perlustrin of Haliotis laevigata (Smooth Australian abalone).